A 61-amino-acid polypeptide reads, in one-letter code: Metallothionein-2D (61 aa).

Position 1 is an N-acetylmethionine (methionine 1). Residues 1-29 (MDPNCSCATRDSCACASSCKCKECKCTSC) are beta. A divalent metal cation is bound by residues cysteine 5, cysteine 7, cysteine 13, cysteine 15, cysteine 19, cysteine 21, cysteine 24, cysteine 26, cysteine 29, cysteine 33, cysteine 34, cysteine 36, cysteine 37, cysteine 41, cysteine 44, cysteine 48, cysteine 50, cysteine 57, cysteine 59, and cysteine 60. Residues 30 to 61 (KKSCCSCCPAGCTKCAQGCICKGASDKCSCCA) form an alpha region.

This sequence belongs to the metallothionein superfamily. Type 1 family. In terms of assembly, monomer.

In terms of biological role, metallothioneins have a high content of cysteine residues that bind various heavy metals; these proteins are transcriptionally regulated by both heavy metals and glucocorticoids. This Oryctolagus cuniculus (Rabbit) protein is Metallothionein-2D.